The following is a 365-amino-acid chain: A-type ATP synthase subunit C (365 aa).

Belongs to the V-ATPase V0D/AC39 subunit family. In terms of assembly, has multiple subunits with at least A(3), B(3), C, D, E, F, H, I and proteolipid K(x).

It localises to the cell membrane. In terms of biological role, component of the A-type ATP synthase that produces ATP from ADP in the presence of a proton gradient across the membrane. The polypeptide is A-type ATP synthase subunit C (Thermococcus kodakarensis (strain ATCC BAA-918 / JCM 12380 / KOD1) (Pyrococcus kodakaraensis (strain KOD1))).